The sequence spans 496 residues: Glycerol kinase (496 aa).

T12 is a binding site for ADP. Residues T12, T13, and S14 each coordinate ATP. Sn-glycerol 3-phosphate is bound at residue T12. R16 lines the ADP pocket. Sn-glycerol 3-phosphate-binding residues include R82, E83, and Y134. Residues R82, E83, and Y134 each coordinate glycerol. H230 bears the Phosphohistidine; by HPr mark. D244 serves as a coordination point for sn-glycerol 3-phosphate. 2 residues coordinate glycerol: D244 and Q245. Positions 266 and 309 each coordinate ADP. 4 residues coordinate ATP: T266, G309, Q313, and G410. Positions 410 and 414 each coordinate ADP.

It belongs to the FGGY kinase family. As to quaternary structure, homotetramer and homodimer (in equilibrium). In terms of processing, the phosphoenolpyruvate-dependent sugar phosphotransferase system (PTS), including enzyme I, and histidine-containing protein (HPr) are required for the phosphorylation, which leads to the activation of the enzyme.

It catalyses the reaction glycerol + ATP = sn-glycerol 3-phosphate + ADP + H(+). The protein operates within polyol metabolism; glycerol degradation via glycerol kinase pathway; sn-glycerol 3-phosphate from glycerol: step 1/1. Its activity is regulated as follows. Activated by phosphorylation and inhibited by fructose 1,6-bisphosphate (FBP). Functionally, key enzyme in the regulation of glycerol uptake and metabolism. Catalyzes the phosphorylation of glycerol to yield sn-glycerol 3-phosphate. The chain is Glycerol kinase from Bacillus mycoides (strain KBAB4) (Bacillus weihenstephanensis).